Here is a 243-residue protein sequence, read N- to C-terminus: UPF0246 protein Spy49_1742 (243 aa).

It belongs to the UPF0246 family.

The chain is UPF0246 protein Spy49_1742 from Streptococcus pyogenes serotype M49 (strain NZ131).